The sequence spans 441 residues: Zinc finger and BTB domain-containing protein 8A (441 aa).

The 69-residue stretch at 24-92 (CDCSILVEGK…VYSGKLSLTG (69 aa)) folds into the BTB domain. 2 stretches are compositionally biased toward polar residues: residues 143–170 (NGVE…SPEQ) and 178–196 (KSWN…TQQP). Positions 143–251 (NGVERSSFYS…QSEEQAQIDA (109 aa)) are disordered. A phosphoserine mark is found at S161 and S167. Glycyl lysine isopeptide (Lys-Gly) (interchain with G-Cter in SUMO2) cross-links involve residues K178, K182, K191, and K199. The segment covering 198-208 (AKHEPRKESIK) has biased composition (basic and acidic residues). The span at 234–243 (SDSSSHVSQS) shows a compositional bias: low complexity. 2 C2H2-type zinc fingers span residues 282–304 (FKCP…LRCH) and 310–333 (YPCQ…RTIH). K437 participates in a covalent cross-link: Glycyl lysine isopeptide (Lys-Gly) (interchain with G-Cter in SUMO2).

It is found in the nucleus. May be involved in transcriptional regulation. The chain is Zinc finger and BTB domain-containing protein 8A (ZBTB8A) from Homo sapiens (Human).